Consider the following 217-residue polypeptide: Somatotropin (217 aa).

The first 26 residues, Met1–Ala26, serve as a signal peptide directing secretion. A Zn(2+)-binding site is contributed by His46. A disulfide bridge links Cys79 with Cys190. Zn(2+) is bound at residue Glu199. Cysteines 207 and 215 form a disulfide.

This sequence belongs to the somatotropin/prolactin family.

It is found in the secreted. Its function is as follows. Growth hormone plays an important role in growth control. The polypeptide is Somatotropin (GH) (Struthio camelus (Common ostrich)).